We begin with the raw amino-acid sequence, 171 residues long: UPF0690 protein C1orf52 homolog A (171 aa).

2 disordered regions span residues 1 to 56 (MAAE…GPDE) and 126 to 171 (NVYQ…KRKV). A compositionally biased stretch (basic and acidic residues) spans 47–56 (EAKKLPGPDE). Over residues 146–160 (EEEAQEDSPPSDDEQ) the composition is skewed to acidic residues.

The protein belongs to the UPF0690 family.

The polypeptide is UPF0690 protein C1orf52 homolog A (Xenopus laevis (African clawed frog)).